Here is a 98-residue protein sequence, read N- to C-terminus: NADH-ubiquinone oxidoreductase chain 4L (98 aa).

Transmembrane regions (helical) follow at residues 1 to 21 (MSLV…GLLM), 29 to 49 (ALLC…LTIL), and 61 to 81 (IILL…LVMI).

It belongs to the complex I subunit 4L family. Core subunit of respiratory chain NADH dehydrogenase (Complex I) which is composed of 45 different subunits.

The protein localises to the mitochondrion inner membrane. It catalyses the reaction a ubiquinone + NADH + 5 H(+)(in) = a ubiquinol + NAD(+) + 4 H(+)(out). Its function is as follows. Core subunit of the mitochondrial membrane respiratory chain NADH dehydrogenase (Complex I) which catalyzes electron transfer from NADH through the respiratory chain, using ubiquinone as an electron acceptor. Part of the enzyme membrane arm which is embedded in the lipid bilayer and involved in proton translocation. This Delphinapterus leucas (Beluga whale) protein is NADH-ubiquinone oxidoreductase chain 4L (MT-ND4L).